Consider the following 563-residue polypeptide: Membrane protein insertase YidC (563 aa).

A helical transmembrane segment spans residues 6–26 (TVLWMIFSFSLLLLWNNWQIH). A disordered region spans residues 36–70 (PAPEAAATQQPKADANGTAASSTASIPSSPAAAPA). The span at 54 to 70 (AASSTASIPSSPAAAPA) shows a compositional bias: low complexity. 4 consecutive transmembrane segments (helical) span residues 373 to 393 (WGWT…PLAA), 443 to 463 (LPMV…LASV), 482 to 502 (PFFI…KLNP), and 512 to 532 (VMMI…AGLV).

The protein belongs to the OXA1/ALB3/YidC family. Type 1 subfamily. As to quaternary structure, interacts with the Sec translocase complex via SecD. Specifically interacts with transmembrane segments of nascent integral membrane proteins during membrane integration.

Its subcellular location is the cell membrane. Required for the insertion and/or proper folding and/or complex formation of integral membrane proteins into the membrane. Involved in integration of membrane proteins that insert both dependently and independently of the Sec translocase complex, as well as at least some lipoproteins. Aids folding of multispanning membrane proteins. This is Membrane protein insertase YidC from Bordetella bronchiseptica (strain ATCC BAA-588 / NCTC 13252 / RB50) (Alcaligenes bronchisepticus).